A 208-amino-acid polypeptide reads, in one-letter code: MAKYTDAKCRQCRREGTKLFLKGDRCFTDKCAFDRRPYAPGQHGRARKKVSDYAVQLREKQKVRRMYGILEQQFHAYFTKADMAKGVTGANLLSLLERRLDNVIYRLGFANSRNQARQLVRHGIFTLNGRKVNIPSLQVRIGDTIEVPEKSRKIPVLAEAQEVIARRGCPAWLEADGANFRGVVKALPQREDIQFPINEHLIVELYSK.

The 64-residue stretch at 98–161 (RRLDNVIYRL…RKIPVLAEAQ (64 aa)) folds into the S4 RNA-binding domain.

The protein belongs to the universal ribosomal protein uS4 family. Part of the 30S ribosomal subunit. Contacts protein S5. The interaction surface between S4 and S5 is involved in control of translational fidelity.

Functionally, one of the primary rRNA binding proteins, it binds directly to 16S rRNA where it nucleates assembly of the body of the 30S subunit. In terms of biological role, with S5 and S12 plays an important role in translational accuracy. This Nitratidesulfovibrio vulgaris (strain ATCC 29579 / DSM 644 / CCUG 34227 / NCIMB 8303 / VKM B-1760 / Hildenborough) (Desulfovibrio vulgaris) protein is Small ribosomal subunit protein uS4.